Consider the following 360-residue polypeptide: Phospho-N-acetylmuramoyl-pentapeptide-transferase (360 aa).

10 consecutive transmembrane segments (helical) span residues 27 to 47, 71 to 91, 94 to 114, 132 to 152, 168 to 188, 199 to 219, 236 to 256, 263 to 283, 288 to 308, and 338 to 358; these read IVSL…MIAF, TPTM…LLWV, NNPY…VGFV, WKYF…YSFG, VMPQ…VGTS, GLAI…AWAT, AGEL…FLWF, VFMG…IAVL, FLLV…ILQV, and VIVR…ATLK.

The protein belongs to the glycosyltransferase 4 family. MraY subfamily. Mg(2+) serves as cofactor.

The protein localises to the cell inner membrane. The catalysed reaction is UDP-N-acetyl-alpha-D-muramoyl-L-alanyl-gamma-D-glutamyl-meso-2,6-diaminopimeloyl-D-alanyl-D-alanine + di-trans,octa-cis-undecaprenyl phosphate = di-trans,octa-cis-undecaprenyl diphospho-N-acetyl-alpha-D-muramoyl-L-alanyl-D-glutamyl-meso-2,6-diaminopimeloyl-D-alanyl-D-alanine + UMP. It participates in cell wall biogenesis; peptidoglycan biosynthesis. In terms of biological role, catalyzes the initial step of the lipid cycle reactions in the biosynthesis of the cell wall peptidoglycan: transfers peptidoglycan precursor phospho-MurNAc-pentapeptide from UDP-MurNAc-pentapeptide onto the lipid carrier undecaprenyl phosphate, yielding undecaprenyl-pyrophosphoryl-MurNAc-pentapeptide, known as lipid I. The chain is Phospho-N-acetylmuramoyl-pentapeptide-transferase from Photorhabdus laumondii subsp. laumondii (strain DSM 15139 / CIP 105565 / TT01) (Photorhabdus luminescens subsp. laumondii).